The following is a 561-amino-acid chain: DNA ligase (561 aa).

An ATP-binding site is contributed by Glu-247. The N6-AMP-lysine intermediate role is filled by Lys-249. Positions 254, 269, 299, 339, 414, and 420 each coordinate ATP.

It belongs to the ATP-dependent DNA ligase family. In terms of assembly, monomer. The cofactor is Mg(2+).

The catalysed reaction is ATP + (deoxyribonucleotide)n-3'-hydroxyl + 5'-phospho-(deoxyribonucleotide)m = (deoxyribonucleotide)n+m + AMP + diphosphate.. In terms of biological role, DNA ligase that seals nicks in double-stranded DNA during DNA replication, DNA recombination and DNA repair. The polypeptide is DNA ligase (Pyrococcus furiosus (strain ATCC 43587 / DSM 3638 / JCM 8422 / Vc1)).